Consider the following 963-residue polypeptide: MAARNLEKMASIDAQLRLLAPGKVSEDDKLIEYDALLLDRFLDILQDLHGEDVREFVQECYEVAADYDGNRNTEKLEELGNMLTSLDPGDSIVVTKSFSNMLSLANLAEEVQIAYRRRIKKLKKGDFADEASATTESDIEETLKRLLQLNKTPEEVFDALKNQTVDLVLTAHPTQSVRRSLLQKFGRIRDCLTQLYAKDITPDDKQELDEALQREIQAAFRTDEIRRTPPTPQDEMRAGMSYFHETIWKGVPKFLRRVDTALKNIGINERVPYNAPLIQFSSWMGGDRDGNPRVTPEVTRDVCLLARMMAANLYFSQIEDLMFEMSMWRCNEELRVRAERQRCAKRDAKHYIEFWKQIPANEPYRAILGDVRDKLYNTRERARQLLSSGVSDVPEDAVFTSVDQFLEPLELCYRSLCDCGDRPIADGSLLDFLRQVSTFGLALVKLDIRQESERHSDVLDAITTHLGIGSYKEWSEDKRQEWLLSELSGKRPLFGPDLPKTEEVADVLDTFKVISELPSDSFGAYIISMATAPSDVLAVELLQRECGITDPLRVVPLFEKLADLESAPAAVARLFSIEWYRNRINGKQEVMIGYSDSGKDAGRLSAAWQLYKTQEELVKVAKEYGVKLTMFHGRGGTVGRGGGPTHLAILSQPPDTIHGQLRVTVQGEVIEQSFGEEHLCFRTLQRFTAATLEHGMHPPVSPKPEWRVLMDEMAIIATEEYRSVVFKEPRFVEYFRLATPELEYGRMNIGSRPSKRKPSGGIESLRAIPWIFAWTQTRFHLPVWLGFGGAFKRVIQKDSKNLNMLKEMYNQWPFFRVTIDLVEMVFAKGDPGIAALYDRLLVSEELQPFGEQLRVNYQETRRLLLQVAGHKDILEGDPYLRQRLQLRDPYITTLNVCQAYTLKQIRDPSFHVKVRPHLSKDYMESSPAAELVKLNPKSEYAPGLEDTVILTMKGIAAGMQNTG.

Serine 11 bears the Phosphoserine mark. Catalysis depends on residues histidine 172 and lysine 599. Phosphoserine is present on serine 701.

It belongs to the PEPCase type 1 family. In terms of assembly, homotetramer. It depends on Mg(2+) as a cofactor. Expressed in all plant organs, with higher levels in stems and leaves.

It localises to the cytoplasm. It carries out the reaction oxaloacetate + phosphate = phosphoenolpyruvate + hydrogencarbonate. Its activity is regulated as follows. By light-reversible phosphorylation. In terms of biological role, through the carboxylation of phosphoenolpyruvate (PEP) it forms oxaloacetate, a four-carbon dicarboxylic acid source for the tricarboxylic acid cycle. The protein is Phosphoenolpyruvate carboxylase 2 (PPC2) of Arabidopsis thaliana (Mouse-ear cress).